A 221-amino-acid polypeptide reads, in one-letter code: Large ribosomal subunit protein uL3 (221 aa).

This sequence belongs to the universal ribosomal protein uL3 family. As to quaternary structure, part of the 50S ribosomal subunit. Forms a cluster with proteins L14 and L19.

Functionally, one of the primary rRNA binding proteins, it binds directly near the 3'-end of the 23S rRNA, where it nucleates assembly of the 50S subunit. This chain is Large ribosomal subunit protein uL3, found in Nocardia farcinica (strain IFM 10152).